Consider the following 127-residue polypeptide: MASNTTFLFSTVTLLIILLNTTVSGRDLPAESSTNIAARLQSGGLMECWNALYELKSCTNEIVLFFLNGETKLGVSCCESVDIITTNCWPAMLTSLGFTPEEANVLRGFCQNPNSGDSSPAPSPKIV.

A signal peptide spans 1–25; sequence MASNTTFLFSTVTLLIILLNTTVSG.

The protein belongs to the plant egg cell-secreted peptide family. In terms of tissue distribution, restricted to female reproductive tissues, specifically accumulating in storage vesicles of the unfertilized egg cell.

Its subcellular location is the cytoplasmic vesicle. The protein localises to the secreted. Involved in the regulation of gamete interactions during the double fertilization and to prevent multiple-pollen tube attraction; mediates the redistribution of the gamete fusogen HAP2/GCS1 to the cell surface after secretion upon sperm arrival. The chain is Egg cell-secreted protein 1.4 (EC1.4) from Arabidopsis thaliana (Mouse-ear cress).